Reading from the N-terminus, the 245-residue chain is 2,3-bisphosphoglycerate-dependent phosphoglycerate mutase (245 aa).

Residues 8–15, 21–22, R60, 87–90, K98, 114–115, and 183–184 each bind substrate; these read RHGQSLWN, TG, ERHY, RR, and GN. H9 serves as the catalytic Tele-phosphohistidine intermediate. The Proton donor/acceptor role is filled by E87.

This sequence belongs to the phosphoglycerate mutase family. BPG-dependent PGAM subfamily.

The enzyme catalyses (2R)-2-phosphoglycerate = (2R)-3-phosphoglycerate. It participates in carbohydrate degradation; glycolysis; pyruvate from D-glyceraldehyde 3-phosphate: step 3/5. In terms of biological role, catalyzes the interconversion of 2-phosphoglycerate and 3-phosphoglycerate. This Bacillus cereus (strain AH187) protein is 2,3-bisphosphoglycerate-dependent phosphoglycerate mutase.